A 373-amino-acid chain; its full sequence is Indole glucosinolate O-methyltransferase 4 (373 aa).

5 residues coordinate S-adenosyl-L-homocysteine: G217, D240, D260, M261, and K274. H278 (proton acceptor) is an active-site residue.

This sequence belongs to the class I-like SAM-binding methyltransferase superfamily. Cation-independent O-methyltransferase family. As to quaternary structure, interacts with B'GAMMA.

It participates in secondary metabolite biosynthesis. Involved in indole glucosinolate biosynthesis. Catalyzes methoxylation reactions of the glucosinolate indole ring. Converts the hydroxy intermediates 4-hydroxy-indol-3-yl-methylglucosinolate (4OH-I3M) and 1-hydroxy-indol-3-yl-methylglucosinolate (1OH-I3M) to 4-methoxy-indol-3-yl-methylglucosinolate (4MO-I3M) and 1-methoxy-indol-3-yl-methylglucosinolate(1MO-I3M), respectively. The protein is Indole glucosinolate O-methyltransferase 4 of Arabidopsis thaliana (Mouse-ear cress).